A 247-amino-acid polypeptide reads, in one-letter code: UDP-N-acetyl-D-mannosaminuronic acid transferase (247 aa).

This sequence belongs to the glycosyltransferase 26 family.

The catalysed reaction is UDP-N-acetyl-alpha-D-mannosaminouronate + N-acetyl-alpha-D-glucosaminyl-di-trans,octa-cis-undecaprenyl diphosphate = beta-D-ManNAcA-(1-&gt;4)-alpha-D-GlcNAc-di-trans,octa-cis-undecaprenyl diphosphate + UDP + H(+). Its pathway is bacterial outer membrane biogenesis; enterobacterial common antigen biosynthesis. In terms of biological role, catalyzes the synthesis of Und-PP-GlcNAc-ManNAcA (Lipid II), the second lipid-linked intermediate involved in enterobacterial common antigen (ECA) synthesis. The chain is UDP-N-acetyl-D-mannosaminuronic acid transferase from Enterobacter sp. (strain 638).